The chain runs to 436 residues: Serine--tRNA ligase (436 aa).

The span at 43–55 (TKSEQLKQKRNEV) shows a compositional bias: basic and acidic residues. Residues 43 to 69 (TKSEQLKQKRNEVSDQIAQAKRNKEDA) are disordered. Position 237–239 (237–239 (TAE)) interacts with L-serine. 268 to 270 (RSE) provides a ligand contact to ATP. E291 is a binding site for L-serine. 355-358 (EISS) is an ATP binding site. Residue S390 coordinates L-serine.

This sequence belongs to the class-II aminoacyl-tRNA synthetase family. Type-1 seryl-tRNA synthetase subfamily. As to quaternary structure, homodimer. The tRNA molecule binds across the dimer.

The protein resides in the cytoplasm. It carries out the reaction tRNA(Ser) + L-serine + ATP = L-seryl-tRNA(Ser) + AMP + diphosphate + H(+). The catalysed reaction is tRNA(Sec) + L-serine + ATP = L-seryl-tRNA(Sec) + AMP + diphosphate + H(+). Its pathway is aminoacyl-tRNA biosynthesis; selenocysteinyl-tRNA(Sec) biosynthesis; L-seryl-tRNA(Sec) from L-serine and tRNA(Sec): step 1/1. In terms of biological role, catalyzes the attachment of serine to tRNA(Ser). Is also able to aminoacylate tRNA(Sec) with serine, to form the misacylated tRNA L-seryl-tRNA(Sec), which will be further converted into selenocysteinyl-tRNA(Sec). The chain is Serine--tRNA ligase from Lactobacillus gasseri (strain ATCC 33323 / DSM 20243 / BCRC 14619 / CIP 102991 / JCM 1131 / KCTC 3163 / NCIMB 11718 / NCTC 13722 / AM63).